A 490-amino-acid chain; its full sequence is GTPase Der (490 aa).

EngA-type G domains follow at residues 3–166 and 203–376; these read PVVA…MDDV and IKLA…DSST. GTP contacts are provided by residues 9–16, 56–60, 118–121, 209–216, 256–260, and 321–324; these read GRPNVGKS, DTGGI, NKTD, DTAGV, and NKWD. The KH-like domain maps to 377–461; it reads RRVSTAMLTR…PIRIQFKEGE (85 aa).

Belongs to the TRAFAC class TrmE-Era-EngA-EngB-Septin-like GTPase superfamily. EngA (Der) GTPase family. Associates with the 50S ribosomal subunit.

In terms of biological role, GTPase that plays an essential role in the late steps of ribosome biogenesis. The sequence is that of GTPase Der from Citrobacter koseri (strain ATCC BAA-895 / CDC 4225-83 / SGSC4696).